Reading from the N-terminus, the 444-residue chain is MSEETATSDNDNSYARVRAVVMTRDDSSGGWLPLGGSGLSSVTVFRVPHQEENGCADFFIRGERLRDKMVVLECMLKKDLIYNKVTPTFHHWKIDDKKFGLTFQSPADARAFDRGIRRAIEDISLGCPASKTEAEGGDDDLQTTEEDTSRSLVKDHFFQQETVVTSEPYRSSDIRPLPFEDLNARRVYLQSQVSQIPFSQQGLDIQSRSMEYVQRQISKECGSLKSQTRVPLKSIRHVSFQDEDEIVRINPRDILIRRYADYRHPDMWKNDLERDDTDSSVPFSKQDSKKSDYLYHCGDETKLSSLKDSVVFKTQPPSLKFKSKRRKEDGERSRCVYCQERFNHEENARGKCQDAPDPVKRCIYQVSCMLCAESMLYHCMSDSEGDFSDPCSCDTSDDKFCLRWLALVALSFIVPCMCCYVPLRMCHRCGEACGCCGGKHKAAG.

At Ser2 the chain carries N-acetylserine. The region spanning 6 to 123 is the WH1 domain; it reads ATSDNDNSYA…RGIRRAIEDI (118 aa). Lys225 is modified (N6-methyllysine). The region spanning 234 to 286 is the KBD domain; that stretch reads SIRHVSFQDEDEIVRINPRDILIRRYADYRHPDMWKNDLERDDTDSSVPFSKQ. The residue at position 239 (Ser239) is a Phosphoserine. The tract at residues 268–287 is disordered; sequence WKNDLERDDTDSSVPFSKQD. Position 309 is a phosphoserine (Ser309). The tract at residues 333–444 is required for interaction with TESK1; the sequence is SRCVYCQERF…CCGGKHKAAG (112 aa). The region spanning 334-442 is the SPR domain; the sequence is RCVYCQERFN…CGCCGGKHKA (109 aa).

Homodimer and heterodimer. Able to interact with SPRED2 to form heterodimers. Interacts (via C-terminus) with TAOK1/MARKK (via C-terminus); the interaction does not affect TAOK1 kinase activity. Interacts (via C-terminus) with TESK1 (via C-terminus); the interaction inhibits TESK1 kinase activity. Interacts with CAV1. Interacts with RAS. Interacts with palmitoyltransferase ZDHHC17/HIP14; the interaction leads to palmitoylation of SPRED1. Palmitoylated by ZDHHC17/HIP14. Post-translationally, ubiquitinated. In terms of processing, phosphorylated on tyrosine. In terms of tissue distribution, expressed in brain. Weakly expressed in lung, heart, liver, kidney, intestine, spleen, testis, thymus, colon and ovary. Also expressed in embryonic tissues such as heart, lung, liver and brain. Highly expressed in IL3-dependent hematopoietic cell lines (Ba/F3 and MC/9) and bone marrow-derived mast cells (BMMC).

The protein resides in the cell membrane. It is found in the membrane. Its subcellular location is the caveola. It localises to the nucleus. Its function is as follows. Tyrosine kinase substrate that inhibits growth-factor-mediated activation of MAP kinase. Negatively regulates hematopoiesis of bone marrow. Inhibits fibroblast growth factor (FGF)-induced retinal lens fiber differentiation, probably by inhibiting FGF-mediated phosphorylation of ERK1/2. Attenuates actin stress fiber formation via inhibition of TESK1-mediated phosphorylation of cofilin. Inhibits TGFB-induced epithelial-to-mesenchymal transition in lens epithelial cells. The protein is Sprouty-related, EVH1 domain-containing protein 1 (Spred1) of Mus musculus (Mouse).